A 171-amino-acid polypeptide reads, in one-letter code: Apoptosis regulator Bcl-2 homolog (171 aa).

Interacts with host BECN1; this interaction inhibits host autophagy. Interacts with host BAK1 and BAX.

It is found in the host cytoplasm. Functionally, plays a role in the protection against apoptosis mediated by cytotoxic cells during the immune response to acute and persistent viral infection. Contributes therefore to latency establishment. Plays also a role in the inhibition of host starvation-induced autophagy which ultimately contributes to the viral chronic infection. The chain is Apoptosis regulator Bcl-2 homolog (vBCL2) from Murid herpesvirus 4 (MuHV-4).